Here is a 119-residue protein sequence, read N- to C-terminus: Insulin growth factor-like family member 2 (119 aa).

The first 25 residues, 1-25 (MVPRIFAPAYVSVCLLLLCPREVIA), serve as a signal peptide directing secretion.

Belongs to the IGFL family. Detected in cerebellum, heart, placenta, spleen, stomach, testis and thymus.

The protein localises to the secreted. Potential ligand of the IGFLR1 cell membrane receptor. This Homo sapiens (Human) protein is Insulin growth factor-like family member 2 (IGFL2).